A 323-amino-acid chain; its full sequence is Dof zinc finger protein DOF3.6 (323 aa).

A Dof-type zinc finger spans residues 76–130 (LNCPRCDSTNTKFCYFNNYSLTQPRHFCKTCRRYWTRGGSLRNVPVGGGFRRNKR). Positions 78, 81, 103, and 106 each coordinate Zn(2+). Disordered stretches follow at residues 121-160 (VGGG…SYSN) and 304-323 (GGNS…HLSF). Residues 126-135 (RRNKRSKSRS) show a composition bias toward basic residues. Positions 136–159 (KSTVVVSTDNTTSTSSLTSRPSYS) are enriched in low complexity.

In terms of assembly, interacts with OBF4. As to expression, predominantly expressed in roots.

Its subcellular location is the nucleus. Its function is as follows. Transcription factor that binds specifically to a 5'-AA[AG]G-3' consensus core sequence. Enhances the DNA binding of OBF transcription factors to OCS elements. This is Dof zinc finger protein DOF3.6 (DOF3.6) from Arabidopsis thaliana (Mouse-ear cress).